Here is a 261-residue protein sequence, read N- to C-terminus: NAD(P)H-quinone oxidoreductase subunit K, chloroplastic (261 aa).

The [4Fe-4S] cluster site is built by cysteine 43, cysteine 44, cysteine 108, and cysteine 139.

This sequence belongs to the complex I 20 kDa subunit family. NDH is composed of at least 16 different subunits, 5 of which are encoded in the nucleus. [4Fe-4S] cluster serves as cofactor.

Its subcellular location is the plastid. The protein resides in the chloroplast thylakoid membrane. It catalyses the reaction a plastoquinone + NADH + (n+1) H(+)(in) = a plastoquinol + NAD(+) + n H(+)(out). The enzyme catalyses a plastoquinone + NADPH + (n+1) H(+)(in) = a plastoquinol + NADP(+) + n H(+)(out). NDH shuttles electrons from NAD(P)H:plastoquinone, via FMN and iron-sulfur (Fe-S) centers, to quinones in the photosynthetic chain and possibly in a chloroplast respiratory chain. The immediate electron acceptor for the enzyme in this species is believed to be plastoquinone. Couples the redox reaction to proton translocation, and thus conserves the redox energy in a proton gradient. This Cycas taitungensis (Prince sago) protein is NAD(P)H-quinone oxidoreductase subunit K, chloroplastic.